Here is a 392-residue protein sequence, read N- to C-terminus: DNA replication and repair protein RecF (392 aa).

30-37 (GPNAAGKT) contacts ATP.

Belongs to the RecF family.

The protein resides in the cytoplasm. The RecF protein is involved in DNA metabolism; it is required for DNA replication and normal SOS inducibility. RecF binds preferentially to single-stranded, linear DNA. It also seems to bind ATP. The protein is DNA replication and repair protein RecF of Chloroflexus aurantiacus (strain ATCC 29364 / DSM 637 / Y-400-fl).